Reading from the N-terminus, the 106-residue chain is Small ribosomal subunit protein uS10 (106 aa).

Belongs to the universal ribosomal protein uS10 family. Part of the 30S ribosomal subunit.

Functionally, involved in the binding of tRNA to the ribosomes. The chain is Small ribosomal subunit protein uS10 from Caldicellulosiruptor bescii (strain ATCC BAA-1888 / DSM 6725 / KCTC 15123 / Z-1320) (Anaerocellum thermophilum).